Here is a 286-residue protein sequence, read N- to C-terminus: MVAVIIKGNEVAEKKRAQLKEEVVKLKEQGIVPGLAVILVGEDPASRSYVKGKEKGCEQVGIYSELIEFPETITEERLLAEIDRLNGDDRINGILVQLPLPKHIEEKAIIERISPEKDVDGFHPISVGRMMTGQDTFLPCTPHGIVELVKETNLDISGKHVVVIGRSNIVGKPVGQLFLNENATVTYCHSKTQNMKELTKLADILIVAVGRPKMVTADYIKEGAVVIDVGVNRLETGKLCGDVDFDNVLDVAGYITPVPKGVGPMTITMLLHNTVESAKRAGVVCK.

NADP(+) is bound by residues 165-167, S190, and V231; that span reads GRS.

Belongs to the tetrahydrofolate dehydrogenase/cyclohydrolase family. Homodimer.

It catalyses the reaction (6R)-5,10-methylene-5,6,7,8-tetrahydrofolate + NADP(+) = (6R)-5,10-methenyltetrahydrofolate + NADPH. It carries out the reaction (6R)-5,10-methenyltetrahydrofolate + H2O = (6R)-10-formyltetrahydrofolate + H(+). It functions in the pathway one-carbon metabolism; tetrahydrofolate interconversion. Functionally, catalyzes the oxidation of 5,10-methylenetetrahydrofolate to 5,10-methenyltetrahydrofolate and then the hydrolysis of 5,10-methenyltetrahydrofolate to 10-formyltetrahydrofolate. The polypeptide is Bifunctional protein FolD (Bacillus thuringiensis (strain Al Hakam)).